The chain runs to 426 residues: Glutamyl-tRNA reductase (426 aa).

Substrate contacts are provided by residues 52–55 (TCNR), Ser-110, 115–117 (EYE), and Gln-121. Cys-53 functions as the Nucleophile in the catalytic mechanism. 190-195 (GAGEMA) contacts NADP(+).

The protein belongs to the glutamyl-tRNA reductase family. As to quaternary structure, homodimer.

The catalysed reaction is (S)-4-amino-5-oxopentanoate + tRNA(Glu) + NADP(+) = L-glutamyl-tRNA(Glu) + NADPH + H(+). The protein operates within porphyrin-containing compound metabolism; protoporphyrin-IX biosynthesis; 5-aminolevulinate from L-glutamyl-tRNA(Glu): step 1/2. In terms of biological role, catalyzes the NADPH-dependent reduction of glutamyl-tRNA(Glu) to glutamate 1-semialdehyde (GSA). The polypeptide is Glutamyl-tRNA reductase (Saccharolobus solfataricus (strain ATCC 35092 / DSM 1617 / JCM 11322 / P2) (Sulfolobus solfataricus)).